Consider the following 94-residue polypeptide: MLKPLGDRVVLKVEEKEQTVGGFVLAGSAQEKTKTAQVVATGQGVRTLNGDLVAPSVKAGDRVLVEAHAGLDVKDGDEKYIIVGEANILAIIEK.

It belongs to the GroES chaperonin family. Heptamer of 7 subunits arranged in a ring. Interacts with the chaperonin GroEL.

It localises to the cytoplasm. Its function is as follows. Together with the chaperonin GroEL, plays an essential role in assisting protein folding. The GroEL-GroES system forms a nano-cage that allows encapsulation of the non-native substrate proteins and provides a physical environment optimized to promote and accelerate protein folding. GroES binds to the apical surface of the GroEL ring, thereby capping the opening of the GroEL channel. This chain is Co-chaperonin GroES, found in Streptococcus mitis.